The sequence spans 303 residues: Oxygen-dependent coproporphyrinogen-III oxidase (303 aa).

Serine 93 contacts substrate. Histidine 97 and histidine 107 together coordinate a divalent metal cation. The active-site Proton donor is histidine 107. A substrate-binding site is contributed by 109–111 (NVR). Residues histidine 149 and histidine 179 each contribute to the a divalent metal cation site. The tract at residues 244–279 (YVEFNLVFDRGTLFGLQSGGRTESILLSMPPMAQWR) is important for dimerization. 262–264 (GGR) provides a ligand contact to substrate.

It belongs to the aerobic coproporphyrinogen-III oxidase family. As to quaternary structure, homodimer. Requires a divalent metal cation as cofactor.

It localises to the cytoplasm. The catalysed reaction is coproporphyrinogen III + O2 + 2 H(+) = protoporphyrinogen IX + 2 CO2 + 2 H2O. It functions in the pathway porphyrin-containing compound metabolism; protoporphyrin-IX biosynthesis; protoporphyrinogen-IX from coproporphyrinogen-III (O2 route): step 1/1. Involved in the heme biosynthesis. Catalyzes the aerobic oxidative decarboxylation of propionate groups of rings A and B of coproporphyrinogen-III to yield the vinyl groups in protoporphyrinogen-IX. The polypeptide is Oxygen-dependent coproporphyrinogen-III oxidase (Bordetella petrii (strain ATCC BAA-461 / DSM 12804 / CCUG 43448)).